Reading from the N-terminus, the 1088-residue chain is DNA mismatch repair protein MutS (1088 aa).

The interval 498-579 (PLDGITPPDD…SFEMPSLHGH (82 aa)) is disordered. The span at 537 to 546 (DLFDEEEEQE) shows a compositional bias: acidic residues. 816–823 (GPNMSGKS) contributes to the ATP binding site. Residues 1000 to 1048 (LERRAPRSTPQPAPERTEERPAAGRPTARSHSAARGDPPRAPDGQLSLF) are disordered.

The protein belongs to the DNA mismatch repair MutS family.

In terms of biological role, this protein is involved in the repair of mismatches in DNA. It is possible that it carries out the mismatch recognition step. This protein has a weak ATPase activity. This Roseiflexus castenholzii (strain DSM 13941 / HLO8) protein is DNA mismatch repair protein MutS.